The sequence spans 566 residues: Membrane protein insertase YidC (566 aa).

Residues 6–26 traverse the membrane as a helical segment; sequence NLLLLALLFVSFLLYTAWVEE. Residues 30-80 form a disordered region; it reads QVAPQVQTEQVDSSVPASVASSANSANLSDGVPNSPQQSSTDATSTELPAS. Residues 31 to 41 are compositionally biased toward polar residues; it reads VAPQVQTEQVD. Residues 42-58 show a composition bias toward low complexity; that stretch reads SSVPASVASSANSANLS. The segment covering 61–80 has biased composition (polar residues); sequence VPNSPQQSSTDATSTELPAS. 4 helical membrane passes run 356 to 376, 433 to 453, 471 to 491, and 510 to 530; these read LLLFFQGIVGNWGVAIILITF, LGGCFPILLQMPIFIALYWSL, LSVQDPYYILPILMGVSMFFI, and FMPVIFTFFFLWFPAGLVLYW.

This sequence belongs to the OXA1/ALB3/YidC family. Type 1 subfamily. Interacts with the Sec translocase complex via SecD. Specifically interacts with transmembrane segments of nascent integral membrane proteins during membrane integration.

It is found in the cell inner membrane. Functionally, required for the insertion and/or proper folding and/or complex formation of integral membrane proteins into the membrane. Involved in integration of membrane proteins that insert both dependently and independently of the Sec translocase complex, as well as at least some lipoproteins. Aids folding of multispanning membrane proteins. This Psychromonas ingrahamii (strain DSM 17664 / CCUG 51855 / 37) protein is Membrane protein insertase YidC.